The following is a 157-amino-acid chain: S-ribosylhomocysteine lyase (157 aa).

Fe cation-binding residues include H54, H58, and C126.

It belongs to the LuxS family. Homodimer. The cofactor is Fe cation.

It catalyses the reaction S-(5-deoxy-D-ribos-5-yl)-L-homocysteine = (S)-4,5-dihydroxypentane-2,3-dione + L-homocysteine. Functionally, involved in the synthesis of autoinducer 2 (AI-2) which is secreted by bacteria and is used to communicate both the cell density and the metabolic potential of the environment. The regulation of gene expression in response to changes in cell density is called quorum sensing. Catalyzes the transformation of S-ribosylhomocysteine (RHC) to homocysteine (HC) and 4,5-dihydroxy-2,3-pentadione (DPD). This chain is S-ribosylhomocysteine lyase, found in Bacillus velezensis (strain DSM 23117 / BGSC 10A6 / LMG 26770 / FZB42) (Bacillus amyloliquefaciens subsp. plantarum).